We begin with the raw amino-acid sequence, 366 residues long: Mitogen-activated protein kinase CPK1 (366 aa).

Residues 17 to 302 (KLEEIVGEGA…SPSKRITVEE (286 aa)) enclose the Protein kinase domain. ATP is bound by residues 22–30 (VGEGAYGLV) and Lys45. The active-site Proton acceptor is the Asp140. Thr181 is modified (phosphothreonine). The TXY signature appears at 181–183 (TEY). Phosphotyrosine is present on Tyr183.

The protein belongs to the protein kinase superfamily. CMGC Ser/Thr protein kinase family. MAP kinase subfamily. Requires Mg(2+) as cofactor. In terms of processing, dually phosphorylated on Thr-181 and Tyr-183, which activates the enzyme.

The enzyme catalyses L-seryl-[protein] + ATP = O-phospho-L-seryl-[protein] + ADP + H(+). It carries out the reaction L-threonyl-[protein] + ATP = O-phospho-L-threonyl-[protein] + ADP + H(+). Activated by tyrosine and threonine phosphorylation. In terms of biological role, responds to activation by environmental stress by phosphorylating downstream targets. The protein is Mitogen-activated protein kinase CPK1 (CPK1) of Cryptococcus neoformans var. neoformans serotype D (strain B-3501A) (Filobasidiella neoformans).